A 465-amino-acid polypeptide reads, in one-letter code: Gamma-aminobutyric acid receptor subunit rho-2 (465 aa).

A signal peptide spans 1–20 (MPYFMRLALFLFCLMALVES). The Extracellular portion of the chain corresponds to 21–260 (RKPRRKRWTG…LYINFTLRRH (240 aa)). Arg105 contributes to the 4-aminobutanoate binding site. Asn120 carries an N-linked (GlcNAc...) asparagine glycan. Ser169 contributes to the 4-aminobutanoate binding site. An intrachain disulfide couples Cys178 to Cys192. Glu197 lines the 4-aminobutanoate pocket. Asn254 carries N-linked (GlcNAc...) asparagine glycosylation. Residues 261 to 281 (IFFFLLQTYFPATLMVMLSWV) form a helical membrane-spanning segment. The Cytoplasmic segment spans residues 282–293 (SFWIDHRAVPAR). Residues 294 to 314 (VSLGIMTVLTMSTIITGVNAS) form a helical membrane-spanning segment. Topologically, residues 315 to 325 (MPRVSYIRAVD) are extracellular. A helical transmembrane segment spans residues 326–346 (IYLWVSFVFVFLSVLEYAAVN). Topologically, residues 347–443 (YLTTVQEQKE…IFQNTHAIDK (97 aa)) are cytoplasmic. Residues 444-464 (YSRLIFPAFYIVFNLIYWSVF) traverse the membrane as a helical segment. A topological domain (extracellular) is located at residue Ser465.

It belongs to the ligand-gated ion channel (TC 1.A.9) family. Gamma-aminobutyric acid receptor (TC 1.A.9.5) subfamily. GABRR2 sub-subfamily. In terms of assembly, three rho subunits (rho-1/GBRR1, rho-2/GBRR2 and rho-3/GBRR3) coassemble either to form functional homopentamers or heteropentamers. Rho-2 is unable to form a functional homopentamer. Interacts with SQSTM1. In terms of tissue distribution, expressed in spinal cord and in cerebellum. Expressed in retina.

The protein localises to the postsynaptic cell membrane. Its subcellular location is the cell membrane. The catalysed reaction is chloride(in) = chloride(out). Its activity is regulated as follows. In contrast with rho-1 and rho-3 homopentamers, rho-2 GABAARs are not inhibited by picrotoxin. Rho subunit of the pentameric ligand-gated chloride channels responsible for mediating the effects of gamma-aminobutyric acid (GABA), the major inhibitory neurotransmitter in the brain. Rho-containing GABA-gated chloride channels are a subclass of GABA(A) receptors (GABAARs) entirely composed of rho subunits, where GABA molecules bind at the rho intersubunit interfaces. When activated by GABA, rho-GABAARs selectively allow the flow of chloride anions across the cell membrane down their electrochemical gradient. Rho-2 GABAARs may contribute to the regulation of glial development in the cerebellum by controlling extrasynaptic transmission. Rho-2 GABAARs are also involved in neuronal tonic (extrasynaptic) and phasic (synaptic) transmission in the Purkinje neurons of the cerebellum. Rho-2 GABAARs expressed in retina may play a role in retinal neurotransmission. This chain is Gamma-aminobutyric acid receptor subunit rho-2, found in Rattus norvegicus (Rat).